A 331-amino-acid chain; its full sequence is tRNA pseudouridine synthase B (331 aa).

Asp51 (nucleophile) is an active-site residue.

Belongs to the pseudouridine synthase TruB family. Type 1 subfamily.

The enzyme catalyses uridine(55) in tRNA = pseudouridine(55) in tRNA. Responsible for synthesis of pseudouridine from uracil-55 in the psi GC loop of transfer RNAs. This chain is tRNA pseudouridine synthase B, found in Verminephrobacter eiseniae (strain EF01-2).